We begin with the raw amino-acid sequence, 317 residues long: Small ribosomal subunit protein uS2 (317 aa).

Ser-2 bears the N-acetylserine mark. Laminin-binding stretches follow at residues 161-180 and 205-229; these read IPCN…MLSR and RDPE…EFQG. [DE]-W-[ST] repeat units follow at residues 230-232 and 245-247; these read EWT and DWS. The tract at residues 242–317 is laminin-binding; that stretch reads EVADWSEGVA…EWGGASADWS (76 aa). Positions 271 to 284 are enriched in low complexity; the sequence is EAAAPSKAPAAAEG. Residues 271–317 are disordered; that stretch reads EAAAPSKAPAAAEGFAEDWSAQPATEDWSAAPTAQATEWGGASADWS. [DE]-W-[ST] repeat units lie at residues 288–290, 297–299, and 315–317; these read DWS.

The protein belongs to the universal ribosomal protein uS2 family. Monomer (37LRP) and homodimer (67LR). Component of the small ribosomal subunit. Mature ribosomes consist of a small (40S) and a large (60S) subunit. The 40S subunit contains about 33 different proteins and 1 molecule of RNA (18S). The 60S subunit contains about 49 different proteins and 3 molecules of RNA (28S, 5.8S and 5S). Interacts with rps21. Interacts with several laminins including at least lamb1. Interacts with mdk. Acylated. Acylation may be a prerequisite for conversion of the monomeric 37 kDa laminin receptor precursor (37LRP) to the mature dimeric 67 kDa laminin receptor (67LR), and may provide a mechanism for membrane association. In terms of processing, cleaved by stromelysin-3 (ST3) at the cell surface. Cleavage by stromelysin-3 may be a mechanism to alter cell-extracellular matrix interactions.

It localises to the cell membrane. The protein resides in the cytoplasm. The protein localises to the nucleus. Required for the assembly and/or stability of the 40S ribosomal subunit. Required for the processing of the 20S rRNA-precursor to mature 18S rRNA in a late step of the maturation of 40S ribosomal subunits. Also functions as a cell surface receptor for laminin. Plays a role in cell adhesion to the basement membrane and in the consequent activation of signaling transduction pathways. May play a role in cell fate determination and tissue morphogenesis. The polypeptide is Small ribosomal subunit protein uS2 (rpsa) (Salmo salar (Atlantic salmon)).